A 1144-amino-acid polypeptide reads, in one-letter code: Guanine nucleotide-binding protein G(s) subunit alpha isoforms XLas (1144 aa).

Disordered stretches follow at residues 1–186, 316–558, 622–657, and 735–772; these read MGML…LAPG, DDDT…PAAG, SASA…SAWP, and RSRS…DKKR. Low complexity predominate over residues 31–46; that stretch reads LEAQGAAAPGAGVGPA. Positions 343–356 are enriched in basic and acidic residues; the sequence is KSEHAKRPPLERQA. Over residues 358 to 369 the composition is skewed to polar residues; that stretch reads ETGNSPISSTTA. Basic and acidic residues predominate over residues 370-381; it reads EEAKVPSLERGE. Low complexity-rich tracts occupy residues 467 to 499 and 518 to 558; these read PAAA…AAEA and EPAA…PAAG. A compositionally biased stretch (pro residues) spans 644–654; it reads PPTPRPAPRPS. Positions 743–767 are enriched in basic and acidic residues; the sequence is KAKDPMEERRKQMRKEAMEMREQKR. Positions 745–772 form a coiled coil; it reads KDPMEERRKQMRKEAMEMREQKRADKKR. Positions 789-1144 constitute a G-alpha domain; it reads CTHRLLLLGA…RMHLRQYELL (356 aa). Residues 792–805 are G1 motif; the sequence is RLLLLGAGESGKST. Position 797–805 (797–805) interacts with GTP; the sequence is GAGESGKST. Serine 804 is a binding site for Mg(2+). Positions 818-840 are disordered; it reads FNGEGGEEDPQAARSNSDGEKAT. Residues 837–863 adopt a coiled-coil conformation; that stretch reads EKATKVQDIKNNLKEAIETIVAAMSNL. A G2 motif region spans residues 946-954; the sequence is DLPRCRVLT. GTP is bound by residues 947-954, 973-977, and 1042-1045; these read LPRCRVLT, DVGGQ, and NKQD. At arginine 951 the chain carries ADP-ribosylarginine; by cholera toxin. Threonine 954 provides a ligand contact to Mg(2+). Residues 969-978 form a G3 motif region; that stretch reads FHMFDVGGQR. Positions 1038–1045 are G4 motif; that stretch reads ILFLNKQD. Serine 1102 carries the phosphoserine modification. The G5 motif stretch occupies residues 1114-1119; it reads TCAVDT. A GTP-binding site is contributed by alanine 1116.

This sequence belongs to the G-alpha family. G(s) subfamily. As to quaternary structure, g proteins are composed of 3 units; alpha, beta and gamma. The alpha chain contains the guanine nucleotide binding site. Interacts through its N-terminal region with ALEX which is produced from the same locus in a different open reading frame. This interaction may inhibit its adenylyl cyclase-stimulating activity. Interacts with MAGED2. As to expression, enriched in neuroendocrine tissues with a particularly high level of expression in pituitary where it is abundant in intermediate and anterior lobes. In adrenal gland, found in central region containing medullary chromaffin cells but not in cortex. In cerebellum, strongly expressed in perikarya of Purkinje cells. Not detected in liver, kidney or neurohypophysis.

The protein resides in the cell membrane. Its subcellular location is the apical cell membrane. Functionally, guanine nucleotide-binding proteins (G proteins) function as transducers in numerous signaling pathways controlled by G protein-coupled receptors (GPCRs). Signaling involves the activation of adenylyl cyclases, resulting in increased levels of the signaling molecule cAMP. GNAS functions downstream of several GPCRs, including beta-adrenergic receptors. XLas isoforms interact with the same set of receptors as Gnas isoforms. The protein is Guanine nucleotide-binding protein G(s) subunit alpha isoforms XLas of Rattus norvegicus (Rat).